Here is a 293-residue protein sequence, read N- to C-terminus: MKKINKLAIVGGTHGNEFTGIYLVKKFEEFPELISRRNFDTQTLLANPQGFELVKRYIDTDLNRCFKVEDLENNTSLNYEESRAKFINQMLGPKGNPKFDFILDLHTTTANMGLTIILVNYHPFNLKIATYLSSVEPNLKIYTCFNPEVENTFINSICERGFAIEVGPIAQGILQADLFYKTEKLVQISLDFIEHFNEGKLDHINRDIVIYKHLKVVDYPKTKDGEIVAMIHPQLQGRDYQKLSPGEPMFLTFDNQTIYYQEESPVWPVFINEAAYYEKGIAMCLTKKESIRV.

The Zn(2+) site is built by H14 and E17. Residues R56 and 63–64 contribute to the substrate site; that span reads NR. H106 provides a ligand contact to Zn(2+). Positions 165 and 276 each coordinate substrate.

It belongs to the AspA/AstE family. Aspartoacylase subfamily. Zn(2+) is required as a cofactor.

It catalyses the reaction an N-acyl-L-aspartate + H2O = a carboxylate + L-aspartate. In Trichodesmium erythraeum (strain IMS101), this protein is Probable aspartoacylase.